The sequence spans 85 residues: Small ribosomal subunit protein eS21 (85 aa).

This sequence belongs to the eukaryotic ribosomal protein eS21 family. Component of the 40S small ribosomal subunit.

Its subcellular location is the cytoplasm. The protein localises to the cytosol. It localises to the rough endoplasmic reticulum. This Pectinaria gouldii (Trumpet worm) protein is Small ribosomal subunit protein eS21 (rps-21).